A 206-amino-acid chain; its full sequence is Protein Nef (206 aa).

Gly-2 is lipidated: N-myristoyl glycine; by host. Phosphoserine; by host is present on Ser-6. Positions 62 to 65 are acidic; interacts with host PACS1 and PACS2; stabilizes the interaction of NEF/MHC-I with host AP1M1; necessary for MHC-I internalization; sequence EEEK. The segment at 69 to 78 is SH3-binding; interaction with Src family tyrosine kinases; that stretch reads PVTPQVPLRP. The short motif at 72 to 75 is the PxxP; stabilizes the interaction of NEF/MHC-I with host AP1M1; necessary for MHC-I internalization element; that stretch reads PQVP. The segment at 108–124 is mediates dimerization, Nef-PTE1 interaction; that stretch reads DILDLWIYHTQGYFPDW. Residues 148-180 form a binding to ATP6V1H region; it reads VEPEKLEEANKGENTSLLHPVSLHGMDDPEREV. A Dileucine internalization motif; necessary for CD4 internalization motif is present at residues 164-165; that stretch reads LL. A Diacidic; necessary for CD4 internalization motif is present at residues 174–175; it reads DD.

This sequence belongs to the lentivirus primate group Nef protein family. As to quaternary structure, monomer; cytosolic form. Homodimer; membrane bound form. Interacts with Nef associated p21-activated kinase (PAK2); this interaction activates PAK2. Associates with the Nef-MHC-I-AP1 complex; this complex is required for MHC-I internalization. Interacts (via C-terminus) with host PI3-kinase. Interacts with host PACS1; this interaction seems to be weak. Interacts with host PACS2. Interacts with host LCK and MAPK3; these interactions inhibit the kinase activity of the latter. Interacts with host ATP6V1H; this interaction may play a role in CD4 endocytosis. Associates with the CD4-Nef-AP2 complex; this complex is required for CD4 internalization. Interacts with host AP2 subunit alpha and AP2 subunit sigma2. Interacts with TCR-zeta chain; this interaction up-regulates the Fas ligand (FasL) surface expression. Interacts with host HCK, LYN, and SRC; these interactions activate the Src family kinases. Interacts with MAP3K5; this interaction inhibits the Fas and TNFR-mediated death signals. Interacts with beta-COP and PTE1. Interacts with human RACK1; this increases Nef phosphorylation by PKC. Interacts with TP53; this interaction decreases the half-life of TP53, protecting the infected cell against p53-mediated apoptosis. In terms of processing, the virion-associated Nef proteins are cleaved by the viral protease to release the soluble C-terminal core protein. Nef is probably cleaved concomitantly with viral structural proteins on maturation of virus particles. Myristoylated. Post-translationally, phosphorylated on serine residues, probably by host PKCdelta and theta.

It is found in the host cell membrane. Its subcellular location is the virion. It localises to the secreted. The protein resides in the host Golgi apparatus membrane. Its function is as follows. Factor of infectivity and pathogenicity, required for optimal virus replication. Alters numerous pathways of T-lymphocyte function and down-regulates immunity surface molecules in order to evade host defense and increase viral infectivity. Alters the functionality of other immunity cells, like dendritic cells, monocytes/macrophages and NK cells. In terms of biological role, in infected CD4(+) T-lymphocytes, down-regulates the surface MHC-I, mature MHC-II, CD4, CD28, CCR5 and CXCR4 molecules. Mediates internalization and degradation of host CD4 through the interaction of with the cytoplasmic tail of CD4, the recruitment of AP-2 (clathrin adapter protein complex 2), internalization through clathrin coated pits, and subsequent transport to endosomes and lysosomes for degradation. Diverts host MHC-I molecules to the trans-Golgi network-associated endosomal compartments by an endocytic pathway to finally target them for degradation. MHC-I down-regulation may involve AP-1 (clathrin adapter protein complex 1) or possibly Src family kinase-ZAP70/Syk-PI3K cascade recruited by PACS2. In consequence infected cells are masked for immune recognition by cytotoxic T-lymphocytes. Decreasing the number of immune receptors also prevents reinfection by more HIV particles (superinfection). Down-regulates host SERINC3 and SERINC5 thereby excluding these proteins from the viral particles. Virion infectivity is drastically higher when SERINC3 or SERINC5 are excluded from the viral envelope, because these host antiviral proteins impair the membrane fusion event necessary for subsequent virion penetration. Functionally, bypasses host T-cell signaling by inducing a transcriptional program nearly identical to that of anti-CD3 cell activation. Interaction with TCR-zeta chain up-regulates the Fas ligand (FasL). Increasing surface FasL molecules and decreasing surface MHC-I molecules on infected CD4(+) cells send attacking cytotoxic CD8+ T-lymphocytes into apoptosis. Plays a role in optimizing the host cell environment for viral replication without causing cell death by apoptosis. Protects the infected cells from apoptosis in order to keep them alive until the next virus generation is ready to strike. Inhibits the Fas and TNFR-mediated death signals by blocking MAP3K5/ASK1. Decreases the half-life of TP53, protecting the infected cell against p53-mediated apoptosis. Inhibits the apoptotic signals regulated by the Bcl-2 family proteins through the formation of a Nef/PI3-kinase/PAK2 complex that leads to activation of PAK2 and induces phosphorylation of host BAD. Its function is as follows. Extracellular Nef protein targets CD4(+) T-lymphocytes for apoptosis by interacting with CXCR4 surface receptors. The polypeptide is Protein Nef (Homo sapiens (Human)).